The chain runs to 360 residues: Chorismate synthase (360 aa).

Residue R46 participates in NADP(+) binding. FMN contacts are provided by residues 123 to 125, 235 to 236, G275, 290 to 294, and R316; these read RSS, NA, and KPTPS.

It belongs to the chorismate synthase family. Homotetramer. FMNH2 is required as a cofactor.

The enzyme catalyses 5-O-(1-carboxyvinyl)-3-phosphoshikimate = chorismate + phosphate. It participates in metabolic intermediate biosynthesis; chorismate biosynthesis; chorismate from D-erythrose 4-phosphate and phosphoenolpyruvate: step 7/7. Its function is as follows. Catalyzes the anti-1,4-elimination of the C-3 phosphate and the C-6 proR hydrogen from 5-enolpyruvylshikimate-3-phosphate (EPSP) to yield chorismate, which is the branch point compound that serves as the starting substrate for the three terminal pathways of aromatic amino acid biosynthesis. This reaction introduces a second double bond into the aromatic ring system. This chain is Chorismate synthase, found in Wolinella succinogenes (strain ATCC 29543 / DSM 1740 / CCUG 13145 / JCM 31913 / LMG 7466 / NCTC 11488 / FDC 602W) (Vibrio succinogenes).